A 390-amino-acid chain; its full sequence is Acetate kinase (390 aa).

N10 provides a ligand contact to Mg(2+). K17 contributes to the ATP binding site. Residue R89 coordinates substrate. D146 (proton donor/acceptor) is an active-site residue. Residues 204 to 208 (HLGNG), 278 to 280 (DMR), and 323 to 327 (GIGEN) each bind ATP. Residue E376 coordinates Mg(2+).

This sequence belongs to the acetokinase family. In terms of assembly, homodimer. Requires Mg(2+) as cofactor. It depends on Mn(2+) as a cofactor.

It is found in the cytoplasm. It carries out the reaction acetate + ATP = acetyl phosphate + ADP. It participates in metabolic intermediate biosynthesis; acetyl-CoA biosynthesis; acetyl-CoA from acetate: step 1/2. Its function is as follows. Catalyzes the formation of acetyl phosphate from acetate and ATP. Can also catalyze the reverse reaction. The polypeptide is Acetate kinase (Mycoplasma pneumoniae (strain ATCC 29342 / M129 / Subtype 1) (Mycoplasmoides pneumoniae)).